Here is a 319-residue protein sequence, read N- to C-terminus: Putrescine hydroxycinnamoyltransferase 2 (319 aa).

Residues His160 and Asp301 each act as proton acceptor in the active site.

This sequence belongs to the plant acyltransferase family.

In terms of biological role, hydroxycinnamoyl transferase that catalyzes the transfer of an acyl from p-coumaryol-CoA to putrescine, to produce coumaroyl putrescine. This Oryza sativa subsp. japonica (Rice) protein is Putrescine hydroxycinnamoyltransferase 2.